The following is a 185-amino-acid chain: Neuronal vesicle trafficking-associated protein 1 (185 aa).

The Cytoplasmic segment spans residues 1 to 82; that stretch reads MVKLGNNFAE…ITEGVTERFK (82 aa). A helical; Signal-anchor for type II membrane protein transmembrane segment spans residues 83–103; that stretch reads VSVLVLFALAFLTCVVFLVVY. The Lumenal portion of the chain corresponds to 104 to 185; it reads KVYKYDRACP…QETEAAEKSA (82 aa). The tract at residues 129-164 is required for GRIP1 interaction; it reads ESYYAEQDSSAREKFYTVINHYNLAKQSITRSVSPW.

This sequence belongs to the NSG family. As to quaternary structure, forms a complex with GRIP1, GRIA2 and STX12 through direct interaction with GRIP1; controls the intracellular fate of AMPAR and the endosomal sorting of the GRIA2 subunit toward recycling and membrane targeting. Interacts with STX12. Interacts with APP; could regulate APP processing. Interacts with FAM171A1.

Its subcellular location is the membrane. It localises to the golgi apparatus. It is found in the trans-Golgi network membrane. The protein localises to the endosome membrane. The protein resides in the cell projection. Its subcellular location is the dendrite. It localises to the early endosome membrane. It is found in the late endosome membrane. The protein localises to the lysosome lumen. The protein resides in the recycling endosome membrane. Its subcellular location is the cytoplasmic vesicle membrane. It localises to the golgi stack membrane. It is found in the endosome. The protein localises to the multivesicular body membrane. The protein resides in the endoplasmic reticulum membrane. In terms of biological role, plays a role in the recycling mechanism in neurons of multiple receptors, including AMPAR, APP and L1CAM and acts at the level of early endosomes to promote sorting of receptors toward a recycling pathway. Regulates sorting and recycling of GRIA2 through interaction with GRIP1 and then contributes to the regulation of synaptic transmission and plasticity by affecting the recycling and targeting of AMPA receptors to the synapse. Is required for faithful sorting of L1CAM to axons by facilitating trafficking from somatodendritic early endosome or the recycling endosome. In an other hand, induces apoptosis via the activation of CASP3 in response to DNA damage. In Macaca fascicularis (Crab-eating macaque), this protein is Neuronal vesicle trafficking-associated protein 1.